Reading from the N-terminus, the 554-residue chain is Wee1-like protein kinase 2-B (554 aa).

Disordered regions lie at residues 1–86 and 145–182; these read MRMA…GGEC and TLVN…DSQM. Position 38 is a phosphoserine (Ser-38). Polar residues-rich tracts occupy residues 38-48 and 147-163; these read SPVSSWRTNNC and VNVN…THFQ. In terms of domain architecture, Protein kinase spans 213-487; the sequence is FLEIEKIGAG…AKNSVLRRCV (275 aa). Residues 219 to 227 and Lys-242 each bind ATP; that span reads IGAGEFGSV. Catalysis depends on Asp-340, which acts as the Proton acceptor. Residues Asn-345 and Asp-377 each coordinate Mg(2+). The stretch at 490–516 forms a coiled coil; the sequence is AAELQKQLNVEKFKTAMLERELQAAKL.

It belongs to the protein kinase superfamily. Ser/Thr protein kinase family. WEE1 subfamily. Interacts with cdca3. Ubiquitinated and degraded at the onset of G2/M phase. Post-translationally, phosphorylated during M and G1 phases. Interacts with cdca3 when phosphorylated at Ser-38.

Its subcellular location is the nucleus. It catalyses the reaction L-tyrosyl-[protein] + ATP = O-phospho-L-tyrosyl-[protein] + ADP + H(+). Its function is as follows. Oocyte and early embryo-specific protein tyrosine kinase that phosphorylates and inhibits cdk1 and acts as a regulator of meiosis in oocytes. Required to ensure the meiotic cell cycle in oocytes by phosphorylating cdk1 at 'Tyr-15', leading to inhibit cdk1 activity and prevent meiosis. This Xenopus laevis (African clawed frog) protein is Wee1-like protein kinase 2-B (wee2-b).